The primary structure comprises 1556 residues: Disco-interacting protein 2 homolog C (1556 aa).

One can recognise a DMAP1-binding domain in the interval Glu7–Val120. Disordered stretches follow at residues Tyr47–Ser157 and Gly170–Ala189. Basic and acidic residues predominate over residues Gly81–Thr93. Composition is skewed to polar residues over residues Val120 to Gly136 and Gln144 to Ser157. Positions Gly170–Ser183 are enriched in low complexity. Thr264 is modified (phosphothreonine).

Belongs to the DIP2 family.

This chain is Disco-interacting protein 2 homolog C (DIP2C), found in Homo sapiens (Human).